The following is a 266-amino-acid chain: 22 kDa alpha-zein 4 (266 aa).

An N-terminal signal peptide occupies residues Met-1–Ala-21.

It belongs to the zein family. Interacts with OP10 (via N-terminus). As to expression, expressed in endosperm, mainly in the peripheral regions.

Its function is as follows. Zeins are major seed storage proteins. This Zea mays (Maize) protein is 22 kDa alpha-zein 4.